Here is a 200-residue protein sequence, read N- to C-terminus: NADH-quinone oxidoreductase subunit B (200 aa).

Residues Cys-78, Cys-79, Cys-144, and Cys-174 each contribute to the [4Fe-4S] cluster site.

The protein belongs to the complex I 20 kDa subunit family. NDH-1 is composed of 14 different subunits. Subunits NuoB, C, D, E, F, and G constitute the peripheral sector of the complex. It depends on [4Fe-4S] cluster as a cofactor.

It localises to the cell membrane. The enzyme catalyses a quinone + NADH + 5 H(+)(in) = a quinol + NAD(+) + 4 H(+)(out). NDH-1 shuttles electrons from NADH, via FMN and iron-sulfur (Fe-S) centers, to quinones in the respiratory chain. The immediate electron acceptor for the enzyme in this species is believed to be ubiquinone. Couples the redox reaction to proton translocation (for every two electrons transferred, four hydrogen ions are translocated across the cytoplasmic membrane), and thus conserves the redox energy in a proton gradient. In Dehalococcoides mccartyi (strain CBDB1), this protein is NADH-quinone oxidoreductase subunit B.